Here is a 371-residue protein sequence, read N- to C-terminus: MKLVFAGGGTGGHLYPALAIAQSWKESHPNDEILFVGTPRGIENTVVPKYGFPLYLLPVEGIPRKVSWETLKKLFLVPKSLINAFIFLKKEKPDIVVGTGGYASFPVVFAATVLKIPTVIHEQNAYPGIANKILAARVDAVCLTFGEAKKRMKAKNLYETGLPVRREFFTNAANRNELRKKMGVGKDELLLVAFGGSQGALTINKVVGYLLPEIMLRPNLRLVWATGPRNYENLKQKYKNLPERVQMVPYIDNMPEVLPAADLAITRAGAATLAEIAASKVPAVLIPYPYAAENHQEHNARAFVSHGAAVLLRDAECSEDRVKATILPLLDSPEKLVKMAENAGKVLRRDSLKEITGIMEALLKPKSNKKT.

UDP-N-acetyl-alpha-D-glucosamine-binding positions include Thr-10 to Gly-12, Asn-124, Arg-165, Ser-197, Ile-251, and Gln-296.

The protein belongs to the glycosyltransferase 28 family. MurG subfamily.

It localises to the cell membrane. The enzyme catalyses di-trans,octa-cis-undecaprenyl diphospho-N-acetyl-alpha-D-muramoyl-L-alanyl-D-glutamyl-meso-2,6-diaminopimeloyl-D-alanyl-D-alanine + UDP-N-acetyl-alpha-D-glucosamine = di-trans,octa-cis-undecaprenyl diphospho-[N-acetyl-alpha-D-glucosaminyl-(1-&gt;4)]-N-acetyl-alpha-D-muramoyl-L-alanyl-D-glutamyl-meso-2,6-diaminopimeloyl-D-alanyl-D-alanine + UDP + H(+). It participates in cell wall biogenesis; peptidoglycan biosynthesis. Functionally, cell wall formation. Catalyzes the transfer of a GlcNAc subunit on undecaprenyl-pyrophosphoryl-MurNAc-pentapeptide (lipid intermediate I) to form undecaprenyl-pyrophosphoryl-MurNAc-(pentapeptide)GlcNAc (lipid intermediate II). The chain is UDP-N-acetylglucosamine--N-acetylmuramyl-(pentapeptide) pyrophosphoryl-undecaprenol N-acetylglucosamine transferase from Carboxydothermus hydrogenoformans (strain ATCC BAA-161 / DSM 6008 / Z-2901).